Reading from the N-terminus, the 690-residue chain is Translation initiation factor IF-2 (690 aa).

The 169-residue stretch at 178 to 346 folds into the tr-type G domain; that stretch reads PRPPVVTVMG…MILLVAEMNE (169 aa). The segment at 187–194 is G1; that stretch reads GHVDHGKT. Residue 187-194 coordinates GTP; it reads GHVDHGKT. Residues 212 to 216 form a G2 region; the sequence is GITQS. Residues 233–236 form a G3 region; it reads DTPG. Residues 233–237 and 287–290 contribute to the GTP site; these read DTPGH and NKID. A G4 region spans residues 287–290; the sequence is NKID. The interval 324 to 326 is G5; that stretch reads SAR.

The protein belongs to the TRAFAC class translation factor GTPase superfamily. Classic translation factor GTPase family. IF-2 subfamily.

Its subcellular location is the cytoplasm. One of the essential components for the initiation of protein synthesis. Protects formylmethionyl-tRNA from spontaneous hydrolysis and promotes its binding to the 30S ribosomal subunits. Also involved in the hydrolysis of GTP during the formation of the 70S ribosomal complex. In Thermotoga sp. (strain RQ2), this protein is Translation initiation factor IF-2.